A 371-amino-acid polypeptide reads, in one-letter code: DNA replication and repair protein RecF (371 aa).

Residue 30–37 (GPNAQGKT) coordinates ATP.

Belongs to the RecF family.

Its subcellular location is the cytoplasm. In terms of biological role, the RecF protein is involved in DNA metabolism; it is required for DNA replication and normal SOS inducibility. RecF binds preferentially to single-stranded, linear DNA. It also seems to bind ATP. The sequence is that of DNA replication and repair protein RecF from Desulforamulus reducens (strain ATCC BAA-1160 / DSM 100696 / MI-1) (Desulfotomaculum reducens).